The following is a 58-amino-acid chain: Large ribosomal subunit protein bL32c (58 aa).

2 disordered regions span residues 1–21 (MAVP…SQWM) and 34–58 (LAGR…MQPN). The segment covering 44-58 (QMQPTQMQPTQMQPN) has biased composition (low complexity).

This sequence belongs to the bacterial ribosomal protein bL32 family.

The protein localises to the plastid. It localises to the chloroplast. The polypeptide is Large ribosomal subunit protein bL32c (Cyanidioschyzon merolae (strain NIES-3377 / 10D) (Unicellular red alga)).